The chain runs to 752 residues: Photosystem I P700 chlorophyll a apoprotein A1 (752 aa).

Helical transmembrane passes span 73–96, 159–182, 198–222, 294–312, 349–372, 388–414, 436–458, and 533–551; these read IFAA…FHGA, LYCT…FHYH, LNHH…HVSA, IAHH…GHQY, WHAQ…HHMY, LCIF…IFMV, AIIS…LYIH, and FLIH…LILL. [4Fe-4S] cluster contacts are provided by C575 and C584. 2 helical membrane passes run 591–612 and 666–688; these read HVFL…HFSW and LSAY…MFLF. Residue H677 coordinates chlorophyll a'. Positions 685 and 693 each coordinate chlorophyll a. W694 is a binding site for phylloquinone. Residues 726 to 746 traverse the membrane as a helical segment; that stretch reads AVGVAHYLLGGIATTWAFFHA.

The protein belongs to the PsaA/PsaB family. In terms of assembly, the PsaA/B heterodimer binds the P700 chlorophyll special pair and subsequent electron acceptors. PSI consists of a core antenna complex that captures photons, and an electron transfer chain that converts photonic excitation into a charge separation. The cyanobacterial PSI reaction center is composed of one copy each of PsaA,B,C,D,E,F,I,J,K,L,M and X, and forms trimeric complexes. The cofactor is PSI electron transfer chain: 5 chlorophyll a, 1 chlorophyll a', 2 phylloquinones and 3 4Fe-4S clusters. PSI core antenna: 90 chlorophyll a, 22 carotenoids, 3 phospholipids and 1 galactolipid. P700 is a chlorophyll a/chlorophyll a' dimer, A0 is one or more chlorophyll a, A1 is one or both phylloquinones and FX is a shared 4Fe-4S iron-sulfur center..

Its subcellular location is the cellular thylakoid membrane. The enzyme catalyses reduced [plastocyanin] + hnu + oxidized [2Fe-2S]-[ferredoxin] = oxidized [plastocyanin] + reduced [2Fe-2S]-[ferredoxin]. PsaA and PsaB bind P700, the primary electron donor of photosystem I (PSI), as well as the electron acceptors A0, A1 and FX. PSI is a plastocyanin/cytochrome c6-ferredoxin oxidoreductase, converting photonic excitation into a charge separation, which transfers an electron from the donor P700 chlorophyll pair to the spectroscopically characterized acceptors A0, A1, FX, FA and FB in turn. Oxidized P700 is reduced on the lumenal side of the thylakoid membrane by plastocyanin or cytochrome c6. The polypeptide is Photosystem I P700 chlorophyll a apoprotein A1 (Nostoc sp. (strain PCC 7120 / SAG 25.82 / UTEX 2576)).